The sequence spans 70 residues: Large ribosomal subunit protein uL29 (70 aa).

The protein belongs to the universal ribosomal protein uL29 family.

The sequence is that of Large ribosomal subunit protein uL29 from Clostridium novyi (strain NT).